The chain runs to 466 residues: Peptidoglycan-N-acetylglucosamine deacetylase PgdA (466 aa).

Residues 1-5 are Cytoplasmic-facing; the sequence is MKIRW. Residues 6–26 form a helical membrane-spanning segment; sequence IRLSLVAILIIAVVFIGVIGF. The Extracellular portion of the chain corresponds to 27-466; sequence QKYQFSKSRN…FDKTDSRMVK (440 aa). One can recognise a NodB homology domain in the interval 266 to 440; it reads KRIALTFDDG…KLKSQGYEFV (175 aa). The Proton acceptor role is filled by aspartate 273. Zn(2+) contacts are provided by aspartate 274, histidine 324, and histidine 328. Residue tyrosine 365 participates in substrate binding. Histidine 415 functions as the Proton donor in the catalytic mechanism.

Homodimer. Interacts (via transmembrane domain) with PbpA1 (via transmembrane domain); the interaction is important for the peptidoglycan N-deacetylase function of this protein. Requires Zn(2+) as cofactor.

The protein localises to the cell membrane. The protein resides in the secreted. It localises to the cell wall. The enzyme catalyses peptidoglycan-N-acetyl-D-glucosamine + H2O = peptidoglycan-D-glucosamine + acetate.. In terms of biological role, catalyzes the deacetylation of N-acetylglucosamine (GlcNAc) residues in peptidoglycan (PG). Also deacetylates N-acetylated PG. Does not deacetylate N-acetylmuramic acid. Confers host lysozyme resistance. Critical for virulence and escape from innate immune response of the host. Required for intracellular survival of bacteria in macrophages of the host. Required for successful host colonization. Controls the production of inflammatory mediators in the bone marrow derived macrophages (BMMs) of the infected mouse. Suppresses Toll-like receptor 2 (TLR2)-dependent secretion of interleukin 6 (IL-6) and interferon-beta (IFN-beta) in the macrophages of the infected mouse. May decrease accessibility of pattern recognition receptors (PRRs) such as nucleotide-binding oligomerization domain protein (NOD) 1 of the host to the bacterial cell wall components. Protects cells from autolysis induced by lysozyme or by other autolysis-inducing agents. The polypeptide is Peptidoglycan-N-acetylglucosamine deacetylase PgdA (Listeria monocytogenes serotype 1/2a (strain 10403S)).